Reading from the N-terminus, the 401-residue chain is MKTRNPIVVQRKNGPPRFLHVNFNQDQECFSCATEKGFEIYNTDPIQCSVKRRFSHNGMSGIGYTRMLYRTNYIGLVGGGASPRFSTNKIAIWDDIQQRDSVSIRFNSPVHELFLSRQYIVVVLAQSIDVYTFSGSPSRVCPVISNIHNGIADFVTCSKMRRASGPQDVEHALSQKHVIAGILAYPSGIRPGQIHIADLSNIQTPSVADASATHLPTSIIKAHKNPIHLVKLSPQGTMVATCSVEGTLIRVFSIASGSLIHEFRRGLDRALIYDMQWNGKGDKLAVVSDKFTLHIFQINEDLDKRHLLKGWFPKVKYLQGVWSMCSTKLDRSLLTHDEDTCKVGWIGDEALSLLWQKSGMWEKYVIMEKLREYKVDETLHSGAPDGRRQLYDLVRESWRQL.

2 WD repeats span residues 222–262 (AHKN…LIHE) and 267–306 (LDRA…DKRH).

Belongs to the WD repeat PROPPIN family.

It localises to the vacuole membrane. It is found in the cytoplasmic vesicle membrane. Its function is as follows. Involved in mitochondrial or peroxisomal functions and amino acid signaling pathways. This is SVP1-like protein 2 (HSV2) from Eremothecium gossypii (strain ATCC 10895 / CBS 109.51 / FGSC 9923 / NRRL Y-1056) (Yeast).